A 310-amino-acid chain; its full sequence is Oxygen-dependent coproporphyrinogen-III oxidase (310 aa).

Substrate is bound at residue Ser-93. 2 residues coordinate a divalent metal cation: His-97 and His-107. The Proton donor role is filled by His-107. 109-111 (NVR) serves as a coordination point for substrate. Residues His-146 and His-176 each contribute to the a divalent metal cation site. Residues 241–276 (YVEFNLVYDRGTLFGLQSGGRTESILMSLPPQVRWS) are important for dimerization. 259 to 261 (GGR) provides a ligand contact to substrate.

Belongs to the aerobic coproporphyrinogen-III oxidase family. In terms of assembly, homodimer. The cofactor is a divalent metal cation.

It localises to the cytoplasm. It catalyses the reaction coproporphyrinogen III + O2 + 2 H(+) = protoporphyrinogen IX + 2 CO2 + 2 H2O. Its pathway is porphyrin-containing compound metabolism; protoporphyrin-IX biosynthesis; protoporphyrinogen-IX from coproporphyrinogen-III (O2 route): step 1/1. In terms of biological role, involved in the heme biosynthesis. Catalyzes the aerobic oxidative decarboxylation of propionate groups of rings A and B of coproporphyrinogen-III to yield the vinyl groups in protoporphyrinogen-IX. The chain is Oxygen-dependent coproporphyrinogen-III oxidase from Pseudomonas fluorescens (strain SBW25).